The primary structure comprises 908 residues: WD repeat-containing protein 44 (908 aa).

The tract at residues 1-163 (MMPLKMCTWG…SSADQLDASK (163 aa)) is binding activity. S17, S40, S61, S71, S86, and S116 each carry phosphoserine. 2 stretches are compositionally biased toward polar residues: residues 108 to 120 (QQGS…QNAA) and 148 to 157 (NNLTEVSSAD). 5 disordered regions span residues 108 to 158 (QQGS…SADQ), 202 to 273 (APAK…KDNI), 309 to 341 (TAQE…RELT), 391 to 418 (VSND…RLKQ), and 454 to 474 (DEVF…GMPY). A phosphothreonine mark is found at T151 and T211. The important for interaction with ARHGAP26 AND ARHGAP10 stretch occupies residues 203–249 (PAKPPRHLTPEPDIVASTKKPVPARPPPPTNFPPPRPPPPSRPAPPP). Residues 225-248 (PARPPPPTNFPPPRPPPPSRPAPP) show a composition bias toward pro residues. S254 carries the post-translational modification Phosphoserine. Residues 254–270 (SDLEFEALKTPDLDVPK) show a composition bias toward basic and acidic residues. T263 bears the Phosphothreonine mark. The segment at 326-339 (VMGPQRPRSNSGRE) is important for interaction with RAB11A. 2 positions are modified to phosphoserine: S334 and S336. Phosphothreonine occurs at positions 341 and 396. Residues S398, S465, S466, and S467 each carry the phosphoserine modification. The segment covering 462 to 471 (DDPSSSDDEG) has biased composition (acidic residues). At Y474 the chain carries Phosphotyrosine. Residues 504-543 (EHMGAVWTMKFSHCGRLLASAGQDNIVRIWALKNAFDYFN) form a WD 1 repeat. The tract at residues 552 to 587 (EGRVSPSPSQESLSSSKSDTDMGVCSGTDEDPDDKN) is disordered. S556 and S560 each carry phosphoserine. The span at 556 to 568 (SPSPSQESLSSSK) shows a compositional bias: low complexity. WD repeat units lie at residues 600-638 (GHTA…CLCC), 640-680 (QHID…VALW), 685-724 (GQTK…YHTQ), 735-774 (KVGR…LSMK), and 779-818 (VNSS…SKFT).

As to quaternary structure, interacts preferentially with the GTP-bound form of RAB11 when membrane-associated. Interacts with GRAF1/ARHGAP26 or GRAF2/ARHGAP10; the interaction connects the endoplasmic reticulum (ER) with the endosomal tubule. Interacts with VAPA (via MSP domain) or VAPB (via MSP domain); the interaction connects the ER with the endosomal tubule. Does not bind to other Rab and Rho small G proteins. Phosphorylated by ATK1; the phosphorylation stabilizes its interaction with RAB11A and RAB11B. Expressed in heart; brain; spleen; lung; liver; muscle and kidney.

The protein localises to the cytoplasm. It localises to the cytosol. Its subcellular location is the perinuclear region. It is found in the endosome membrane. The protein resides in the golgi apparatus. The protein localises to the trans-Golgi network. In terms of biological role, downstream effector for Rab11 which regulates Rab11 intracellular membrane trafficking functions such as endocytic recycling, intracellular ciliogenesis and protein export. ATK1-mediated phosphorylation of WDR44 induces binding to Rab11 which activates endocytic recycling of transferrin receptor back to the plasma membrane. When bound to Rab11, prevents the formation of the ciliogenic Rab11-Rabin8/RAB3IP-RAB11FIP3 complex, therefore inhibiting preciliary trafficking and ciliogenesis. May participate in neo-synthesized protein export by connecting the endoplasmic reticulum (ER) with the endosomal tubule via direct interactions with the integral ER proteins VAPA or VAPB and the endosomal protein GRAFs (GRAF1/ARHGAP26 or GRAF2/ARHGAP10), which facilitates the transfer of proteins such as E-cadherin, MPP14 and CFTR into a Rab8-Rab10-Rab11-dependent export route. The sequence is that of WD repeat-containing protein 44 from Rattus norvegicus (Rat).